Reading from the N-terminus, the 281-residue chain is Pantothenate synthetase (281 aa).

Residue 31-38 (MGNLHAGH) participates in ATP binding. Catalysis depends on His-38, which acts as the Proton donor. Gln-62 is a (R)-pantoate binding site. Residue Gln-62 coordinates beta-alanine. 150 to 153 (GKKD) lines the ATP pocket. Position 156 (Gln-156) interacts with (R)-pantoate. ATP is bound by residues Val-179 and 187 to 190 (MSSR).

It belongs to the pantothenate synthetase family. In terms of assembly, homodimer.

The protein localises to the cytoplasm. The catalysed reaction is (R)-pantoate + beta-alanine + ATP = (R)-pantothenate + AMP + diphosphate + H(+). It functions in the pathway cofactor biosynthesis; (R)-pantothenate biosynthesis; (R)-pantothenate from (R)-pantoate and beta-alanine: step 1/1. Its function is as follows. Catalyzes the condensation of pantoate with beta-alanine in an ATP-dependent reaction via a pantoyl-adenylate intermediate. This Xylella fastidiosa (strain M23) protein is Pantothenate synthetase.